The sequence spans 161 residues: E3 ubiquitin ligase complex SCF subunit sconC (161 aa).

The tract at residues Ile103–Glu161 is interaction with the F-box domain of F-box proteins.

The protein belongs to the SKP1 family. In terms of assembly, component of the SCF (SKP1-CUL1-F-box protein) E3 ubiquitin ligase complexes.

Its pathway is protein modification; protein ubiquitination. Functionally, essential component of the SCF (SKP1-CUL1-F-box protein) E3 ubiquitin ligase complexes, which mediate the ubiquitination and subsequent proteasomal degradation of target proteins. Controls sulfur metabolite repression, probably by mediating the inactivation or degradation of the metR transcription factor. This chain is E3 ubiquitin ligase complex SCF subunit sconC (sconC), found in Aspergillus terreus (strain NIH 2624 / FGSC A1156).